The following is a 291-amino-acid chain: DNA N6-methyl adenine demethylase (291 aa).

Residues 85–256 enclose the Fe2OG dioxygenase domain; sequence GLTLIHNFLS…RGRRIALTMR (172 aa). 171–173 contacts 2-oxoglutarate; the sequence is LEY. The Fe cation site is built by His-184, Asp-186, and His-239.

The protein belongs to the alkB family. Interacts with top-2; the interaction is required for localization of top-2 to DNA. Also interacts with mtss-1, his-24, ule-3, C18B2.3, pgl-1, ceh-93, mcm-4 and F37C4.5. Requires Fe(2+) as cofactor.

It localises to the nucleus. It carries out the reaction an N(6)-methyl-2'-deoxyadenosine in DNA + 2-oxoglutarate + O2 = a 2'-deoxyadenosine in DNA + formaldehyde + succinate + CO2. Dioxygenase that specifically demethylates DNA methylated on the 6th position of adenine (N(6)-methyladenosine) DNA. N(6)-methyladenosine (m6A) DNA is involved in epigenetic transgenerational inheritance. Plays an essential role in DNA replication and repair in the germline during meiosis. Binds to components of the DNA replication machinery such as top-2, and directs their localization to DNA to control DNA replication. The polypeptide is DNA N6-methyl adenine demethylase (Caenorhabditis elegans).